The following is a 563-amino-acid chain: Germacrene-A synthase (563 aa).

Asp-316, Asp-320, Asp-461, and Glu-469 together coordinate Mg(2+). The DDXXD motif signature appears at 316-320; it reads DDIYD.

It belongs to the terpene synthase family. Tpsa subfamily. The cofactor is Mg(2+). In terms of tissue distribution, expressed in young leaves. Detected in trichomes and cones.

The catalysed reaction is (2E,6E)-farnesyl diphosphate = (+)-(R)-germacrene A + diphosphate. It participates in secondary metabolite biosynthesis; terpenoid biosynthesis. Sesquiterpene synthase that catalyzes the formation of germacrene A. Can use farnesyl diphosphate as substrate, but not geranyl diphosphate or geranylgeranyl diphosphate. Beta-elemene, the initially measured product in the assay, is derived nonenzymatically from germacrene A. This chain is Germacrene-A synthase, found in Humulus lupulus (European hop).